A 160-amino-acid chain; its full sequence is 3-hydroxyacyl-[acyl-carrier-protein] dehydratase FabZ (160 aa).

The active site involves His59.

Belongs to the thioester dehydratase family. FabZ subfamily.

The protein resides in the cytoplasm. It catalyses the reaction a (3R)-hydroxyacyl-[ACP] = a (2E)-enoyl-[ACP] + H2O. Involved in unsaturated fatty acids biosynthesis. Catalyzes the dehydration of short chain beta-hydroxyacyl-ACPs and long chain saturated and unsaturated beta-hydroxyacyl-ACPs. This Burkholderia thailandensis (strain ATCC 700388 / DSM 13276 / CCUG 48851 / CIP 106301 / E264) protein is 3-hydroxyacyl-[acyl-carrier-protein] dehydratase FabZ.